Here is a 69-residue protein sequence, read N- to C-terminus: Beta-defensin 1 (69 aa).

The N-terminal stretch at 1 to 21 (MKTHYFLLVMICFLFSQMEPG) is a signal peptide. The propeptide occupies 22 to 32 (VGILTSLGRRT). 3 cysteine pairs are disulfide-bonded: Cys-37-Cys-66, Cys-44-Cys-59, and Cys-49-Cys-67.

This sequence belongs to the beta-defensin family. In terms of assembly, monomer. Homodimer. In terms of tissue distribution, detected in kidney.

It localises to the secreted. Its subcellular location is the membrane. Its function is as follows. Has bactericidal activity. May act as a ligand for C-C chemokine receptor CCR6. Positively regulates the sperm motility and bactericidal activity in a CCR6-dependent manner. Binds to CCR6 and triggers Ca2+ mobilization in the sperm which is important for its motility. This Mus musculus (Mouse) protein is Beta-defensin 1 (Defb1).